The primary structure comprises 217 residues: Peroxiredoxin (217 aa).

One can recognise a Thioredoxin domain in the interval 2–159; the sequence is VVIGEKFPEV…VVRLVKALQT (158 aa). Residue C46 is the Cysteine sulfenic acid (-SOH) intermediate of the active site. R122 lines the substrate pocket.

The protein belongs to the peroxiredoxin family. Prx6 subfamily. Homodecamer. Pentamer of dimers that assemble into a ring structure.

The protein localises to the cytoplasm. It carries out the reaction a hydroperoxide + [thioredoxin]-dithiol = an alcohol + [thioredoxin]-disulfide + H2O. Its function is as follows. Thiol-specific peroxidase that catalyzes the reduction of hydrogen peroxide and organic hydroperoxides to water and alcohols, respectively. Plays a role in cell protection against oxidative stress by detoxifying peroxides. The protein is Peroxiredoxin of Methanococcus maripaludis (strain C5 / ATCC BAA-1333).